The chain runs to 189 residues: Peptidyl-tRNA hydrolase (189 aa).

Y15 contributes to the tRNA binding site. The active-site Proton acceptor is the H20. TRNA-binding residues include F66, N68, and N114.

This sequence belongs to the PTH family. Monomer.

Its subcellular location is the cytoplasm. The enzyme catalyses an N-acyl-L-alpha-aminoacyl-tRNA + H2O = an N-acyl-L-amino acid + a tRNA + H(+). In terms of biological role, hydrolyzes ribosome-free peptidyl-tRNAs (with 1 or more amino acids incorporated), which drop off the ribosome during protein synthesis, or as a result of ribosome stalling. Catalyzes the release of premature peptidyl moieties from peptidyl-tRNA molecules trapped in stalled 50S ribosomal subunits, and thus maintains levels of free tRNAs and 50S ribosomes. The protein is Peptidyl-tRNA hydrolase of Streptococcus equi subsp. zooepidemicus (strain MGCS10565).